A 425-amino-acid polypeptide reads, in one-letter code: O-methyltransferase AMT9 (425 aa).

S-adenosyl-L-methionine contacts are provided by residues 257 to 258 (GG), Asp280, 306 to 307 (DF), Arg322, and Arg323. His326 (proton acceptor) is an active-site residue.

It belongs to the class I-like SAM-binding methyltransferase superfamily. Cation-independent O-methyltransferase family.

Its pathway is mycotoxin biosynthesis. In terms of biological role, O-methyltransferase; part of the gene clusters that mediate the biosynthesis of AM-toxins, host-selective toxins (HSTs) causing Alternaria blotch on apple, a worldwide distributed disease. AM-toxins are cyclic depsipeptides containing the 3 residues 2-hydroxy-isovaleric acid (2-HIV), dehydroalanine, L-alanine which are common for all 3 AM-toxins I to III. The fourth precursor is L-alpha-amino-methoxyphenyl-valeric acid (L-Amv) for AM-toxin I, L-alpha-amino-phenyl-valeric acid (L-Apv) for AM-toxin II, and L-alpha-amino-hydroxyphenyl-valeric acid (L-Ahv) for AM-toxin III. AM-toxins have two target sites for affecting susceptible apple cells; they cause invagination of the plasma membrane and electrolyte loss and chloroplast disorganization. The non-ribosomal peptide synthetase AMT1 contains 4 catalytic modules and is responsible for activation of each residue in AM-toxin. The aldo-keto reductase AMT2 catalyzes the conversion of 2-keto-isovaleric acid (2-KIV) to 2-hydroxy-isovaleric acid (2-HIV), one of the precursor residues incorporated by AMT1 during AM-toxin biosynthesis, by reduction of its ketone to an alcohol. The cytochrome P450 monooxygenase AMT3 and the thioesterase AMT4 are also important for AM-toxin production, but their exact function within the AM-toxin biosynthesis are not known yet. Up to 21 proteins (including AMT1 to AMT4) are predicted to be involved in AM-toxin biosynthesis since their expression ishighly up-regulated in AM-toxin-producing cultures. The polypeptide is O-methyltransferase AMT9 (Alternaria alternata (Alternaria rot fungus)).